Consider the following 176-residue polypeptide: MARPDKAAAVAELTDKFRSSNAAVLTEYRGLTVAQLKTLRRSLGENAQYAVVKNTLTKIAAKEAGITLEDQLFAGPTAVAFVTGDPVESAKGLRDFAKENPNLVIKGGVLDGKALSADEIKKLADLESREVLLSKLAGAFKAKQSQAASVFQALPSKLVRTVDALRAKQAEQGGAE.

Belongs to the universal ribosomal protein uL10 family. As to quaternary structure, part of the ribosomal stalk of the 50S ribosomal subunit. The N-terminus interacts with L11 and the large rRNA to form the base of the stalk. The C-terminus forms an elongated spine to which L12 dimers bind in a sequential fashion forming a multimeric L10(L12)X complex.

In terms of biological role, forms part of the ribosomal stalk, playing a central role in the interaction of the ribosome with GTP-bound translation factors. This is Large ribosomal subunit protein uL10 (rplJ) from Streptomyces antibioticus.